The primary structure comprises 319 residues: ATP-dependent 6-phosphofructokinase (319 aa).

Glycine 11 is an ATP binding site. Position 21–25 (arginine 21–arginine 25) interacts with ADP. ATP is bound by residues arginine 72–cysteine 73 and glycine 102–serine 105. Residue aspartate 103 coordinates Mg(2+). Substrate is bound at residue threonine 125 to aspartate 127. Catalysis depends on aspartate 127, which acts as the Proton acceptor. Position 154 (arginine 154) interacts with ADP. Residues arginine 162 and methionine 169–arginine 171 each bind substrate. ADP contacts are provided by residues glycine 185 to glutamate 187, arginine 211, and lysine 213 to histidine 215. Residues glutamate 222, arginine 243, and histidine 249 to arginine 252 each bind substrate.

Belongs to the phosphofructokinase type A (PFKA) family. ATP-dependent PFK group I subfamily. Prokaryotic clade 'B1' sub-subfamily. Homotetramer. Mg(2+) serves as cofactor.

The protein resides in the cytoplasm. It catalyses the reaction beta-D-fructose 6-phosphate + ATP = beta-D-fructose 1,6-bisphosphate + ADP + H(+). Its pathway is carbohydrate degradation; glycolysis; D-glyceraldehyde 3-phosphate and glycerone phosphate from D-glucose: step 3/4. Allosterically activated by ADP and other diphosphonucleosides, and allosterically inhibited by phosphoenolpyruvate. In terms of biological role, catalyzes the phosphorylation of D-fructose 6-phosphate to fructose 1,6-bisphosphate by ATP, the first committing step of glycolysis. The chain is ATP-dependent 6-phosphofructokinase from Macrococcus caseolyticus (strain JCSC5402) (Macrococcoides caseolyticum).